The primary structure comprises 274 residues: Hydroxyethylthiazole kinase (274 aa).

Met46 lines the substrate pocket. The ATP site is built by Arg122 and Thr173. Gly200 is a substrate binding site.

This sequence belongs to the Thz kinase family. Mg(2+) serves as cofactor.

The catalysed reaction is 5-(2-hydroxyethyl)-4-methylthiazole + ATP = 4-methyl-5-(2-phosphooxyethyl)-thiazole + ADP + H(+). It functions in the pathway cofactor biosynthesis; thiamine diphosphate biosynthesis; 4-methyl-5-(2-phosphoethyl)-thiazole from 5-(2-hydroxyethyl)-4-methylthiazole: step 1/1. Functionally, catalyzes the phosphorylation of the hydroxyl group of 4-methyl-5-beta-hydroxyethylthiazole (THZ). In Clostridium tetani (strain Massachusetts / E88), this protein is Hydroxyethylthiazole kinase.